The following is a 797-amino-acid chain: N-acetylneuraminate (7)9-O-acetyltransferase (797 aa).

Residues 1 to 18 (MAALAYNLGKREINHYFS) lie on the Cytoplasmic side of the membrane. Residues 19–39 (VRSAKVLALVAVLLLAACHLA) form a helical membrane-spanning segment. The Lumenal segment spans residues 40–313 (SRRYRGNDSC…QPRPPLTLIQ (274 aa)). Residue asparagine 46 is glycosylated (N-linked (GlcNAc...) asparagine). Serine 94 acts as the Acyl-ester intermediate in catalysis. Asparagine 175 and asparagine 187 each carry an N-linked (GlcNAc...) asparagine glycan. Residues aspartate 270 and histidine 273 contribute to the active site. The chain crosses the membrane as a helical span at residues 314–334 (KLAACFFTLSIIGYFIFYVIH). Residues 335-363 (RNAHRKNKPCTDLESGEEKKNIINTPVSS) are Cytoplasmic-facing. A helical membrane pass occupies residues 364 to 384 (LEILLQSFCKLGLIMAYFYMC). Residues 385–395 (DRANLFMKENK) lie on the Lumenal side of the membrane. The chain crosses the membrane as a helical span at residues 396 to 416 (FYTHSSFFIPIIYILVLGVFY). Topologically, residues 417–439 (NENTKETKVLNREQTDEWKGWMQ) are cytoplasmic. The helical transmembrane segment at 440 to 460 (LVILIYHISGASTFLPVYMHI) threads the bilayer. A topological domain (lumenal) is located at residue arginine 461. Residues 462-482 (VLVAAYLFQTGYGHFSYFWIK) form a helical membrane-spanning segment. At 483 to 486 (GDFG) the chain is on the cytoplasmic side. Residues 487 to 507 (IHRVCQVLFRLNFLVVVLCIV) form a helical membrane-spanning segment. Residues 508–513 (MDRPYQ) lie on the Lumenal side of the membrane. The chain crosses the membrane as a helical span at residues 514-534 (FYYFVPLVTVWFMVIYVTLAL). Over 535–546 (WPQITQKKANGN) the chain is Cytoplasmic. The chain crosses the membrane as a helical span at residues 547–567 (FFWYLGLLLKLGLLLLCIWFL). Residues 568–599 (AYSQGAFEKIFSLWPLSKCFELEGSVYEWWFR) lie on the Lumenal side of the membrane. A helical transmembrane segment spans residues 600–620 (WRLDRYVVFHGVLFAFIYLAL). Over 621 to 638 (QRRQILSEGKGEPLFSNK) the chain is Cytoplasmic. A helical transmembrane segment spans residues 639-659 (ISNFLLFVSVVSFLTYSIWAS). Over 660-671 (SCKNKAECNELH) the chain is Lumenal. A helical membrane pass occupies residues 672–692 (PSVSVVQIVAFILIRNIPGYA). The Cytoplasmic portion of the chain corresponds to 693–698 (RSIYSS). A helical transmembrane segment spans residues 699–719 (FFAWFGKISLELFICQYHIWL). Residues 720–725 (AADTRG) lie on the Lumenal side of the membrane. The helical transmembrane segment at 726–746 (ILVLIPGNPTLNIIVSTFIFV) threads the bilayer. The Cytoplasmic segment spans residues 747–770 (CVAHEISQITTDLAQVVIPKDNPS). The helical transmembrane segment at 771 to 791 (LFRRLACTIAFFGGVLILSSI) threads the bilayer. Residues 792-797 (QDKSRL) lie on the Lumenal side of the membrane.

Belongs to the PC-esterase family. CASD1 subfamily. Post-translationally, N-glycosylated. Ubiquitously expressed.

The protein resides in the golgi apparatus membrane. The enzyme catalyses CMP-N-acetyl-beta-neuraminate + acetyl-CoA = CMP-N-acetyl-9-O-acetyl-beta-neuraminate + CoA. It carries out the reaction a ganglioside GD3 (d18:1(4E)) + acetyl-CoA = a ganglioside Ac-O-7-GD3(d18:1(4E)) + CoA. It catalyses the reaction CMP-N-acetyl-beta-neuraminate + acetyl-CoA = CMP-N-acetyl-7-O-acetyl-beta-neuraminate + CoA. Functionally, key enzyme in the biosynthesis of O-acetylated (O-Ac) sialoglycans such as gangliosides O-AcGD3 and O-AcGD2, which affect various processes such as cell-cell interactions, host-pathogen recognition. Catalyzes the transfer of an acetyl group from a donor, the acetyl-coenzyme-A molecule (acetyl-CoA), to the C7/8/9 OH-position of a sialic acid residue. The primary site of O-acetyl group transfer on sialic acid seems to depend on cell type and can be C7, from which the O-acetyl group could subsequently migrate to the C8 and then to the C9 position, or at C9 with possibility of migrating to the C8 and then to the C7 position. Together with ST8SIA1 (GD3 synthase) it increases the levels of ganglioside Ac-O-7-GD3. Can transfer the acetyl group from acetyl-CoA to free sialate (N-acetylneuraminate, Neu5Ac) in vitro, but has preferred substrate specificity for CMP-activated sialate (CMP-Neu5Ac), resulting in the formation of 9-O-acetylated CMP-Neu5Ac (CMP-Neu5,9Ac2). CMP-Neu5,9Ac2 may be used by sialyltransferases as a sialate donor for glycoconjugate acceptors such as ganglioside GD3. O-acetylation at position C9 of ganglioside GD3 can counteract the pro-apoptotic effects of the ganglioside GD3 in tumor cells. This is N-acetylneuraminate (7)9-O-acetyltransferase from Mus musculus (Mouse).